We begin with the raw amino-acid sequence, 163 residues long: Putative pre-16S rRNA nuclease (163 aa).

This sequence belongs to the YqgF nuclease family.

The protein localises to the cytoplasm. Functionally, could be a nuclease involved in processing of the 5'-end of pre-16S rRNA. The polypeptide is Putative pre-16S rRNA nuclease (Rhodopseudomonas palustris (strain BisB18)).